We begin with the raw amino-acid sequence, 147 residues long: Protein YjdN (147 aa).

The polypeptide is Protein YjdN (yjdN) (Escherichia coli (strain K12)).